The primary structure comprises 507 residues: ATP synthase subunit alpha, chloroplastic (507 aa).

170-177 lines the ATP pocket; that stretch reads GDRQTGKT.

This sequence belongs to the ATPase alpha/beta chains family. In terms of assembly, F-type ATPases have 2 components, CF(1) - the catalytic core - and CF(0) - the membrane proton channel. CF(1) has five subunits: alpha(3), beta(3), gamma(1), delta(1), epsilon(1). CF(0) has four main subunits: a, b, b' and c.

It is found in the plastid. The protein resides in the chloroplast thylakoid membrane. It catalyses the reaction ATP + H2O + 4 H(+)(in) = ADP + phosphate + 5 H(+)(out). Its function is as follows. Produces ATP from ADP in the presence of a proton gradient across the membrane. The alpha chain is a regulatory subunit. The protein is ATP synthase subunit alpha, chloroplastic of Nicotiana sylvestris (Wood tobacco).